Reading from the N-terminus, the 121-residue chain is Large ribosomal subunit protein bL12 (121 aa).

Belongs to the bacterial ribosomal protein bL12 family. Homodimer. Part of the ribosomal stalk of the 50S ribosomal subunit. Forms a multimeric L10(L12)X complex, where L10 forms an elongated spine to which 2 to 4 L12 dimers bind in a sequential fashion. Binds GTP-bound translation factors.

Forms part of the ribosomal stalk which helps the ribosome interact with GTP-bound translation factors. Is thus essential for accurate translation. This is Large ribosomal subunit protein bL12 from Aliivibrio salmonicida (strain LFI1238) (Vibrio salmonicida (strain LFI1238)).